We begin with the raw amino-acid sequence, 159 residues long: Cyclic pyranopterin monophosphate synthase (159 aa).

Substrate contacts are provided by residues 74–76 (MCH) and 112–113 (ME). Asp127 is a catalytic residue.

The protein belongs to the MoaC family. As to quaternary structure, homohexamer; trimer of dimers.

It catalyses the reaction (8S)-3',8-cyclo-7,8-dihydroguanosine 5'-triphosphate = cyclic pyranopterin phosphate + diphosphate. It functions in the pathway cofactor biosynthesis; molybdopterin biosynthesis. Functionally, catalyzes the conversion of (8S)-3',8-cyclo-7,8-dihydroguanosine 5'-triphosphate to cyclic pyranopterin monophosphate (cPMP). This is Cyclic pyranopterin monophosphate synthase from Helicobacter hepaticus (strain ATCC 51449 / 3B1).